The following is a 602-amino-acid chain: Elongation factor 4 (602 aa).

In terms of domain architecture, tr-type G spans 7–189; the sequence is KFIRNFSIIA…QLVVAIPPPV (183 aa). Residues 19-24 and 136-139 contribute to the GTP site; these read DHGKST and NKID.

It belongs to the TRAFAC class translation factor GTPase superfamily. Classic translation factor GTPase family. LepA subfamily.

Its subcellular location is the cell inner membrane. The catalysed reaction is GTP + H2O = GDP + phosphate + H(+). Functionally, required for accurate and efficient protein synthesis under certain stress conditions. May act as a fidelity factor of the translation reaction, by catalyzing a one-codon backward translocation of tRNAs on improperly translocated ribosomes. Back-translocation proceeds from a post-translocation (POST) complex to a pre-translocation (PRE) complex, thus giving elongation factor G a second chance to translocate the tRNAs correctly. Binds to ribosomes in a GTP-dependent manner. In Coxiella burnetii (strain RSA 493 / Nine Mile phase I), this protein is Elongation factor 4.